Reading from the N-terminus, the 329-residue chain is Stimulator of interferon genes protein (329 aa).

Residues 1–4 (MACV) lie on the Cytoplasmic side of the membrane. The chain crosses the membrane as a helical span at residues 5–25 (LAIGSILFVWILGKGKYSGAQ). Residue Leu-26 is a topological domain, lumenal. A helical membrane pass occupies residues 27 to 52 (IYRMATNFAISQGCCLVTCACELTEE). The Cytoplasmic portion of the chain corresponds to 53–74 (IKHLHTRYNGHYWRALKASFNL). A helical membrane pass occupies residues 75 to 88 (SCAAFVTAILCYVF). The Lumenal segment spans residues 89 to 98 (YEPKLMASLP). The helical transmembrane segment at 99–116 (LTIDITLTLLSWLFCWIL) threads the bilayer. The Cytoplasmic segment spans residues 117 to 329 (GIQGPTPATI…QQHSEEYSML (213 aa)). The cyclic dinucleotide-binding domain (CBD) stretch occupies residues 135-325 (LNVAHGLAWS…KHIRQQHSEE (191 aa)). Ser-144, Tyr-149, Arg-220, and Thr-245 together coordinate 2',3'-cGAMP. 3',3'-c-di-GMP contacts are provided by residues Ser-144, Tyr-149, 220 to 223 (RVFK), and Thr-245.

It belongs to the STING family. Homodimer; forms a homodimer in absence of cyclic nucleotide (c-di-GMP or cGAMP). Homotetramer; in presence of cyclic nucleotide (c-di-GMP or cGAMP), forms tetramers and higher-order oligomers through side-by-side packing.

It is found in the endoplasmic reticulum membrane. The protein resides in the cytoplasm. It localises to the perinuclear region. Its subcellular location is the endoplasmic reticulum-Golgi intermediate compartment membrane. The protein localises to the golgi apparatus membrane. It is found in the cytoplasmic vesicle. The protein resides in the autophagosome membrane. It catalyses the reaction H(+)(in) = H(+)(out). Its function is as follows. Sensor of cytosolic DNA from bacteria and viruses that promotes autophagy. Acts by recognizing and binding cyclic GMP-AMP (cGAMP), a messenger produced by CGAS in response to DNA in the cytosol. Exhibits guanine base-specific ligand recognition: binds 3'-3'linked cGAMP, 2'-3' linked cGAMP and 3'-3' linked c-di-GMP with much greater affinity as compared to 3'-3' linked c-di-AMP. Following cGAMP-binding, promotes the formation of autophagosomes, leading to target cytosolic DNA for degradation by the lysosome. Promotes autophagy by acting as a proton channel that directs proton efflux from the Golgi to facilitate LC3 lipidation. Lacks the C-terminal tail (CTT) found in other vertebrate orthologs which is essential for interferon signaling. In Xenopus tropicalis (Western clawed frog), this protein is Stimulator of interferon genes protein.